The sequence spans 323 residues: Sphingomyelinase D (323 aa).

Positions 1 to 20 (MISLLRLCSFLAAGSILVQG) are cleaved as a signal peptide. The active site involves His-59. Mg(2+)-binding residues include Glu-79, Asp-81, and Asp-127. Residues 308–315 (ATNDDNPW) carry the SMD-tail motif.

It belongs to the sphingomyelinase D/phospholipase D family. Requires Mg(2+) as cofactor.

It localises to the secreted. It carries out the reaction a sphingomyelin + H2O = an N-acylsphing-4-enine 1-phosphate + choline + H(+). Its function is as follows. Catalyzes the hydrolysis of sphingomyelin. Sphingomyelinases D are produced by some spider in their venoms, but also by arthropods such as ticks, or pathogenic bacteria and fungi. They might play a role in pathogenicity through different mechanisms, such as membrane destabilization and host cell penetration, but also pulmonary inflammation and cutaneous lesions. In Trichophyton rubrum (strain ATCC MYA-4607 / CBS 118892) (Athlete's foot fungus), this protein is Sphingomyelinase D.